The primary structure comprises 180 residues: MSRFLVRLSTVVSKGATGKSVLPQKRIFAGIRLISSSTGLQSLTRYDQSTDWQRKLSPEQYVVTREKGTEVPFSGIYLNHNEVGMYHCVCCDSPLFSSEAKYDAGAGWPSFCEAHGTWEKDESHANIVRRPDNSLGSTGTEVICKHCDAHLGHVFEDGPDPTGQRFCINSVALNFKPREK.

The N-terminal 41 residues, 1-41 (MSRFLVRLSTVVSKGATGKSVLPQKRIFAGIRLISSSTGLQ), are a transit peptide targeting the mitochondrion. In terms of domain architecture, MsrB spans 49 to 178 (STDWQRKLSP…NSVALNFKPR (130 aa)). Zn(2+) is bound by residues C88, C91, C144, and C147. Catalysis depends on C167, which acts as the Nucleophile.

This sequence belongs to the MsrB Met sulfoxide reductase family. Zn(2+) is required as a cofactor.

The protein resides in the mitochondrion. It carries out the reaction L-methionyl-[protein] + [thioredoxin]-disulfide + H2O = L-methionyl-(R)-S-oxide-[protein] + [thioredoxin]-dithiol. The catalysed reaction is [thioredoxin]-disulfide + L-methionine + H2O = L-methionine (R)-S-oxide + [thioredoxin]-dithiol. Functionally, methionine-sulfoxide reductase that specifically reduces methionine (R)-sulfoxide back to methionine. While in many cases, methionine oxidation is the result of random oxidation following oxidative stress, methionine oxidation is also a post-translational modification that takes place on specific residue. Upon oxidative stress, may play a role in the preservation of mitochondrial integrity by decreasing the intracellular reactive oxygen species build-up through its scavenging role, hence contributing to cell survival and protein maintenance. The protein is Methionine-R-sulfoxide reductase B2, mitochondrial (msrb2) of Danio rerio (Zebrafish).